A 440-amino-acid polypeptide reads, in one-letter code: Transposon Ty1-MR1 Gag polyprotein (440 aa).

3 stretches are compositionally biased toward polar residues: residues 1–31 (MESQ…TTQD), 46–60 (VSTQ…TPLS), and 137–168 (VGTH…TNQH). Disordered regions lie at residues 1-88 (MESQ…YPQQ), 137-174 (VGTH…PPPI), and 350-424 (QQES…TTEP). Residues 299–401 (NNGIPINNKV…NSQSRTARAH (103 aa)) are RNA-binding. Positions 363–372 (SPSDEKKDSR) are enriched in basic and acidic residues. Residues 373-411 (TYTNTTKPKSITRNSQKPNNSQSRTARAHNVSTFNNSPG) are compositionally biased toward polar residues.

In terms of assembly, homotrimer.

It localises to the cytoplasm. Functionally, capsid protein (CA) is the structural component of the virus-like particle (VLP), forming the shell that encapsulates the retrotransposons dimeric RNA genome. The particles are assembled from trimer-clustered units and there are holes in the capsid shells that allow for the diffusion of macromolecules. CA also has nucleocapsid-like chaperone activity, promoting primer tRNA(i)-Met annealing to the multipartite primer-binding site (PBS), dimerization of Ty1 RNA and initiation of reverse transcription. In Saccharomyces cerevisiae (strain ATCC 204508 / S288c) (Baker's yeast), this protein is Transposon Ty1-MR1 Gag polyprotein (TY1A-MR1).